The sequence spans 742 residues: Zinc transporter ZIP6 (742 aa).

Residues 1–353 (MMTFLCTRSG…QRNTPVYIAW (353 aa)) are Extracellular-facing. N-linked (GlcNAc...) asparagine glycosylation is found at Asn94 and Asn127. Disordered stretches follow at residues 148–182 (PVTT…SQSD) and 191–210 (MNQE…RSRR). The span at 152–165 (KKGDMDHSVEKSDP) shows a compositional bias: basic and acidic residues. The segment covering 192 to 206 (NQESTTALTTPSYVT) has biased composition (polar residues). Residues Asn212, Asn232, and Asn237 are each glycosylated (N-linked (GlcNAc...) asparagine). The segment at 220–260 (TQDHASFSPSQPNVTHSNHTHHDEDTPTHQHDDHDEHEHAR) is disordered. Residues 222–236 (DHASFSPSQPNVTHS) show a composition bias toward polar residues. The span at 239–260 (THHDEDTPTHQHDDHDEHEHAR) shows a compositional bias: basic and acidic residues. Residues Asn267 and Asn337 are each glycosylated (N-linked (GlcNAc...) asparagine). Positions 310-342 (EDEHSDHSHHHKHHHHHHDHQHLQHPHNHTNGR) are disordered. Positions 316 to 339 (HSHHHKHHHHHHDHQHLQHPHNHT) are enriched in basic residues. The chain crosses the membrane as a helical span at residues 354 to 374 (LGGFLSITLISLLALVGVVLI). Over 375–385 (PLMNRVCFNFL) the chain is Cytoplasmic. A helical transmembrane segment spans residues 386-406 (LSFLVALAVGTLSGDALLHLI). Over 407 to 430 (PHSQGHHHHGHSEEHAEEEDSLRP) the chain is Extracellular. Residues 431-451 (VWTGLTALSGVYIMFLIEHFL) traverse the membrane as a helical segment. Over 452 to 644 (TLGKMYKDKN…LKAGMSVRQA (193 aa)) the chain is Cytoplasmic. The chain crosses the membrane as a helical span at residues 645–665 (MLYNLLSALMGYLGMIIGILI). The Extracellular portion of the chain corresponds to 666–671 (GHYAEN). A helical transmembrane segment spans residues 672 to 692 (VATWIFALTAGLFMYVALVDM). Residues 693–710 (VPEMLHNDASEAGFSHYG) are Cytoplasmic-facing. A helical membrane pass occupies residues 711–731 (FFLLQNAGILLGFGIMLIIAV). The Extracellular segment spans residues 732–742 (FEDRIQLDLGY).

It belongs to the ZIP transporter (TC 2.A.5) family. Cleaved on the N-terminus before locating to the plasma membrane. Post-translationally, N-glycosylated.

It is found in the cell membrane. It carries out the reaction Zn(2+)(in) = Zn(2+)(out). Its function is as follows. Acts as a zinc-influx transporter which plays a role in zinc homeostasis and in the induction of epithelial-to-mesenchymal transition (EMT). The protein is Zinc transporter ZIP6 of Danio rerio (Zebrafish).